The sequence spans 194 residues: Glycerol-3-phosphate acyltransferase (194 aa).

5 helical membrane-spanning segments follow: residues 2–22 (LIEI…TGLL), 51–71 (SVGI…VLAA), 80–100 (WIAL…FLGF), 112–132 (VFLG…VAVV), and 155–175 (FLSG…LVIW).

The protein belongs to the PlsY family. Probably interacts with PlsX.

The protein localises to the cell inner membrane. It catalyses the reaction an acyl phosphate + sn-glycerol 3-phosphate = a 1-acyl-sn-glycero-3-phosphate + phosphate. The protein operates within lipid metabolism; phospholipid metabolism. In terms of biological role, catalyzes the transfer of an acyl group from acyl-phosphate (acyl-PO(4)) to glycerol-3-phosphate (G3P) to form lysophosphatidic acid (LPA). This enzyme utilizes acyl-phosphate as fatty acyl donor, but not acyl-CoA or acyl-ACP. This chain is Glycerol-3-phosphate acyltransferase, found in Geobacter metallireducens (strain ATCC 53774 / DSM 7210 / GS-15).